The sequence spans 304 residues: Ribonuclease BN (304 aa).

Zn(2+) contacts are provided by histidine 63, histidine 65, aspartate 67, histidine 68, histidine 140, aspartate 211, and histidine 269. The active-site Proton acceptor is aspartate 67.

Belongs to the RNase Z family. RNase BN subfamily. In terms of assembly, homodimer. The cofactor is Zn(2+).

Its function is as follows. Zinc phosphodiesterase, which has both exoribonuclease and endoribonuclease activities. The protein is Ribonuclease BN of Cronobacter sakazakii (strain ATCC BAA-894) (Enterobacter sakazakii).